The following is a 359-amino-acid chain: NADH-quinone oxidoreductase subunit H (359 aa).

The next 8 helical transmembrane spans lie at 19–39 (IGWF…FIAL), 94–114 (FLFV…FAVL), 127–147 (VGLF…LAAG), 166–186 (IVSY…LAGT), 202–222 (FMHW…IYFI), 266–286 (MFMV…SPLP), 301–321 (VWGA…QMWL), and 337–357 (CWKV…IWVI).

Belongs to the complex I subunit 1 family. As to quaternary structure, NDH-1 is composed of 14 different subunits. Subunits NuoA, H, J, K, L, M, N constitute the membrane sector of the complex.

It is found in the cell inner membrane. It carries out the reaction a quinone + NADH + 5 H(+)(in) = a quinol + NAD(+) + 4 H(+)(out). NDH-1 shuttles electrons from NADH, via FMN and iron-sulfur (Fe-S) centers, to quinones in the respiratory chain. The immediate electron acceptor for the enzyme in this species is believed to be ubiquinone. Couples the redox reaction to proton translocation (for every two electrons transferred, four hydrogen ions are translocated across the cytoplasmic membrane), and thus conserves the redox energy in a proton gradient. This subunit may bind ubiquinone. This chain is NADH-quinone oxidoreductase subunit H, found in Chlorobaculum parvum (strain DSM 263 / NCIMB 8327) (Chlorobium vibrioforme subsp. thiosulfatophilum).